The sequence spans 404 residues: Probable eukaryotic initiation factor 4A (404 aa).

Residues 1-28 (MAQQGKVEPQDQDSFLDDQPGIRPIPSF) are disordered. Residues 26–54 (PSFDDMPLHQNLLRGIYSHGFEKPSSIQQ) carry the Q motif motif. Residues 57–231 (IVPFTRGGDI…KKFMRDPTRI (175 aa)) enclose the Helicase ATP-binding domain. Residue 70-77 (AQSGTGKT) participates in ATP binding. The short motif at 179-182 (DEAD) is the DEAD box element. Residues 242-402 (GIKQFFIAVE…ELPVDFAAYL (161 aa)) form the Helicase C-terminal domain.

This sequence belongs to the DEAD box helicase family. eIF4A subfamily. EIF4F is a multi-subunit complex, the composition of which varies with external and internal environmental conditions. It is composed of at least EIF4A, EIF4E and EIF4G.

It carries out the reaction ATP + H2O = ADP + phosphate + H(+). In terms of biological role, ATP-dependent RNA helicase which is a subunit of the eIF4F complex involved in cap recognition and is required for mRNA binding to ribosome. In the current model of translation initiation, eIF4A unwinds RNA secondary structures in the 5'-UTR of mRNAs which is necessary to allow efficient binding of the small ribosomal subunit, and subsequent scanning for the initiator codon. The sequence is that of Probable eukaryotic initiation factor 4A from Trypanosoma brucei brucei (strain 927/4 GUTat10.1).